Reading from the N-terminus, the 568-residue chain is Periplasmic pectate lyase (568 aa).

Residues 1 to 19 (MKRFALSLLAGLVALQASA) form the signal peptide.

Belongs to the polysaccharide lyase 2 family.

Its subcellular location is the periplasm. It catalyses the reaction Eliminative cleavage of (1-&gt;4)-alpha-D-galacturonan to give oligosaccharides with 4-deoxy-alpha-D-galact-4-enuronosyl groups at their non-reducing ends.. The protein operates within glycan metabolism; pectin degradation; 2-dehydro-3-deoxy-D-gluconate from pectin: step 2/5. This chain is Periplasmic pectate lyase (pelB), found in Pectobacterium carotovorum subsp. carotovorum (Erwinia carotovora subsp. carotovora).